Reading from the N-terminus, the 1296-residue chain is ABC transporter B family member 21 (1296 aa).

Residues 1–59 are disordered; it reads MDSVIESEEGLKVDSPNRADAETSNSKIHEEDEKELKTESDLKEEKKKTEKNKQEEDEK. Positions 9-59 are enriched in basic and acidic residues; the sequence is EGLKVDSPNRADAETSNSKIHEEDEKELKTESDLKEEKKKTEKNKQEEDEK. Residues 77–97 form a helical membrane-spanning segment; it reads IILMILGTIGAVGNGLGFPIM. The ABC transmembrane type-1 1 domain maps to 80 to 368; that stretch reads MILGTIGAVG…ASPCLSAFAA (289 aa). An N-linked (GlcNAc...) asparagine glycan is attached at N113. The next 5 helical transmembrane spans lie at 128–148, 205–225, 227–247, 307–327, and 336–356; these read FVYLGLGTLVAALLQVSGWMI, IQLVSTFIGGFVIAFTEGWLL, LVMVSSIPLLVMSGAALAIVI, GLGLGTLNIVIFCTYALAVWY, and GYTGGQVLIIIFAVLTGSMSL. The 237-residue stretch at 403 to 639 folds into the ABC transporter 1 domain; it reads IELNNVNFSY…PEGAYSQLIR (237 aa). A glycan (N-linked (GlcNAc...) asparagine) is linked at N409. 438–445 serves as a coordination point for ATP; that stretch reads GQSGSGKS. N505, N519, and N590 each carry an N-linked (GlcNAc...) asparagine glycan. Basic and acidic residues predominate over residues 640–662; the sequence is LQEDTKQTEDSTDEQKLSMESMK. The disordered stretch occupies residues 640–672; sequence LQEDTKQTEDSTDEQKLSMESMKRSSLRKSSLS. S657 and S660 each carry phosphoserine. Positions 730–1017 constitute an ABC transmembrane type-1 2 domain; that stretch reads LILGSIAAVL…SSSLSPDSSK (288 aa). Helical transmembrane passes span 731 to 751 and 774 to 794; these read ILGSIAAVLNGVILPIFGILI and IIFMLLGVASMVVFPAQTIFF. A glycan (N-linked (GlcNAc...) asparagine) is linked at N826. The next 3 helical transmembrane spans lie at 865 to 885, 952 to 972, and 986 to 1006; these read VIAFVASWQLAFIVLAMLPLI, GIVSGIGFGVSFFVLFSSYAA, and TTFDSVFRVFFALTMAAVAIS. The region spanning 1052–1289 is the ABC transporter 2 domain; that stretch reads IELRHISFKY…KDGVYASLVQ (238 aa). 1087-1094 is a binding site for ATP; sequence GESGSGKS. N-linked (GlcNAc...) asparagine glycans are attached at residues N1141 and N1240.

This sequence belongs to the ABC transporter superfamily. ABCB family. Multidrug resistance exporter (TC 3.A.1.201) subfamily.

It is found in the membrane. This Arabidopsis thaliana (Mouse-ear cress) protein is ABC transporter B family member 21 (ABCB21).